The primary structure comprises 465 residues: Cysteine--tRNA ligase (465 aa).

Cys27 provides a ligand contact to Zn(2+). The 'HIGH' region signature appears at 29 to 39 (PTVYDDAHLGH). Zn(2+) contacts are provided by Cys207, His237, and Glu241. The short motif at 269 to 273 (KMSKS) is the 'KMSKS' region element. Lys272 provides a ligand contact to ATP.

It belongs to the class-I aminoacyl-tRNA synthetase family. Monomer. Zn(2+) serves as cofactor.

It localises to the cytoplasm. The enzyme catalyses tRNA(Cys) + L-cysteine + ATP = L-cysteinyl-tRNA(Cys) + AMP + diphosphate. This Helicobacter pylori (strain P12) protein is Cysteine--tRNA ligase.